Consider the following 711-residue polypeptide: Choline transporter-like protein 2 (711 aa).

The Cytoplasmic portion of the chain corresponds to 1–33 (MGDERPHYYGKHGTPQKYDPTFKGPIYNRGCTD). Position 14 is a phosphothreonine (Thr-14). The helical transmembrane segment at 34–54 (VICCVFLLVAIVGYVAVGIIA) threads the bilayer. Residues 55–232 (WTHGDPRKVI…RIFEDYTVSW (178 aa)) are Extracellular-facing. N-linked (GlcNAc...) asparagine glycosylation is found at Asn-187 and Asn-200. The chain crosses the membrane as a helical span at residues 233–253 (YWIIIGLVIAMAMSLLFIILL). The Cytoplasmic segment spans residues 254–256 (RFL). A helical membrane pass occupies residues 257-277 (AGIMVWVMIIMVILVLGYGIF). The Extracellular portion of the chain corresponds to 278 to 315 (HCYMEYSRLRGEAGSDVSLVDLGFQTDFRVYLHLRQTW). A helical membrane pass occupies residues 316–336 (LAFMIILSILEVIIILLLIFL). Residues 337–364 (RKRILIAIALIKEASRAVGYVMCTMLYP) are Cytoplasmic-facing. The chain crosses the membrane as a helical span at residues 365-385 (LVTFFLLCLCIAYWASTAVFL). Residues 386–440 (STSNEAVYKIFDDGLCPFTAKTCNPETFPSSNESRQCPNARCQFAFYGGESGYHR) lie on the Extracellular side of the membrane. Asn-417 is a glycosylation site (N-linked (GlcNAc...) asparagine). The chain crosses the membrane as a helical span at residues 441-461 (ALLGLQIFNAFMFFWLANFVL). Over 462–504 (ALGQVTLAGAFASYYWALRKPDDLPAFPLFSAFGRALRYHTGS) the chain is Cytoplasmic. The chain crosses the membrane as a helical span at residues 505 to 525 (LAFGALILAIVQIIRVILEYL). Topologically, residues 526–563 (DQRLKAAENKFAKCLMTCLKCCFWCLEKFIKFLNRNAY) are extracellular. A helical transmembrane segment spans residues 564–584 (IMIAIYGTNFCTSARNAFFLL). The Cytoplasmic segment spans residues 585–599 (MRNIIRVAVLDKVTD). The helical transmembrane segment at 600–620 (FLFLLGKLLIVGSVGILAFFF) threads the bilayer. At 621 to 638 (FTHRIRIVQDTAPPLNYY) the chain is on the extracellular side. The chain crosses the membrane as a helical span at residues 639-659 (WVPILTVIVGSYLIAHGFFSV). The Cytoplasmic portion of the chain corresponds to 660 to 711 (YGMCVDTLFLCFCEDLERNDGSQERPYFMSPELRDILLKGSAEEGKRAEAEE).

The protein belongs to the CTL (choline transporter-like) family. In terms of assembly, interacts with COCH. N-glycosylated.

It localises to the cell membrane. The protein resides in the mitochondrion outer membrane. It carries out the reaction choline(out) + n H(+)(in) = choline(in) + n H(+)(out). It catalyses the reaction ethanolamine(out) + n H(+)(in) = ethanolamine(in) + n H(+)(out). Functionally, choline/H+ antiporter, mainly in mitochodria. Also acts as a low-affinity ethanolamine/H+ antiporter, regulating the supply of extracellular ethanolamine (Etn) for the CDP-Etn pathway, redistribute intracellular Etn and balance the CDP-Cho and CDP-Etn arms of the Kennedy pathway. In Pongo abelii (Sumatran orangutan), this protein is Choline transporter-like protein 2 (SLC44A2).